The sequence spans 116 residues: Diuretic hormone class 2 (116 aa).

The signal sequence occupies residues 1–25 (MTNRCACFALAFLLFCLLAISSIEA). A propeptide spanning residues 26–75 (APMPSQSNGGYGGAGYNELEEVPDDLLMELMTRFGRTIIRARNDLENSKR) is cleaved from the precursor. Proline 106 is modified (proline amide). Residues 112–116 (SETDV) constitute a propeptide that is removed on maturation.

The protein localises to the secreted. In terms of biological role, regulation of fluid secretion. Stimulates Malpighian tubules fluid secretion by activating the apical membrane V-ATPase via cyclic AMP of principal cells in the main secretory segment. This is Diuretic hormone class 2 (Dh31) from Drosophila melanogaster (Fruit fly).